Reading from the N-terminus, the 246-residue chain is Probable transcriptional regulatory protein NT01CX_1819 (246 aa).

The protein belongs to the TACO1 family.

Its subcellular location is the cytoplasm. The chain is Probable transcriptional regulatory protein NT01CX_1819 from Clostridium novyi (strain NT).